Reading from the N-terminus, the 1164-residue chain is DNA-directed RNA polymerase 132 kDa polypeptide (1164 aa).

This sequence belongs to the RNA polymerase beta chain family. In terms of assembly, the DNA-dependent RNA polymerase used for intermediate and late genes expression consists of eight subunits (147) kDa, (133) kDa, (35) kDa, (30) kDa, (22) kDa, (19) kDa, (18) kDa and (7) kDa totalling more than 500 kDa in mass. The same holoenzyme, with the addition of the transcription-specificity factor RAP94, is used for early gene expression.

The protein localises to the virion. It carries out the reaction RNA(n) + a ribonucleoside 5'-triphosphate = RNA(n+1) + diphosphate. Its function is as follows. Part of the DNA-dependent RNA polymerase which catalyzes the transcription of viral DNA into RNA using the four ribonucleoside triphosphates as substrates. Responsible for the transcription of early, intermediate and late genes. DNA-dependent RNA polymerase associates with the early transcription factor (ETF), itself composed of D6 and A7, thereby allowing the early genes transcription. Late transcription, and probably also intermediate transcription, require newly synthesized RNA polymerase. The sequence is that of DNA-directed RNA polymerase 132 kDa polypeptide (RPO132) from Camelus.